The primary structure comprises 327 residues: Movement protein (327 aa).

Positions 297-327 (SASSSNTENELARVSQNIDLLKNKLKEICGE) form a coiled coil.

This sequence belongs to the caulimoviridae movement protein family. As to quaternary structure, homotrimer, through the coiled-coil domain. Interacts with VAP. May interact (via N-terminus) with host prenylated Rab acceptor protein 1D (PRA1D).

Its subcellular location is the host cell junction. The protein localises to the host plasmodesma. Functionally, transports viral genome to neighboring plant cells directly through plasmosdesmata, without any budding. The movement protein allows efficient cell to cell propagation, by bypassing the host cell wall barrier. Acts by forming tubules structures that increase the size exclusion limit (SEL) of plasmodesmata, thereby allowing viral ribonucleocapsids to spread directly to neighboring cells. This chain is Movement protein, found in Cauliflower mosaic virus (strain W260) (CaMV).